The chain runs to 182 residues: NADH-quinone oxidoreductase subunit B (182 aa).

Residues C61, C62, C126, and C156 each contribute to the [4Fe-4S] cluster site.

The protein belongs to the complex I 20 kDa subunit family. NDH-1 is composed of 14 different subunits. Subunits NuoB, C, D, E, F, and G constitute the peripheral sector of the complex. Requires [4Fe-4S] cluster as cofactor.

Its subcellular location is the cell inner membrane. It catalyses the reaction a quinone + NADH + 5 H(+)(in) = a quinol + NAD(+) + 4 H(+)(out). In terms of biological role, NDH-1 shuttles electrons from NADH, via FMN and iron-sulfur (Fe-S) centers, to quinones in the respiratory chain. The immediate electron acceptor for the enzyme in this species is believed to be ubiquinone. Couples the redox reaction to proton translocation (for every two electrons transferred, four hydrogen ions are translocated across the cytoplasmic membrane), and thus conserves the redox energy in a proton gradient. In Xanthomonas oryzae pv. oryzae (strain PXO99A), this protein is NADH-quinone oxidoreductase subunit B.